Reading from the N-terminus, the 332-residue chain is 2,3-diketo-L-gulonate reductase (332 aa).

The active-site Proton donor is H44. NAD(+)-binding positions include I168–S174, W224–K225, and G304–E306.

The protein belongs to the LDH2/MDH2 oxidoreductase family. DlgD subfamily. As to quaternary structure, homodimer.

The protein localises to the cytoplasm. It carries out the reaction 3-dehydro-L-gulonate + NAD(+) = 2,3-dioxo-L-gulonate + NADH + H(+). It catalyses the reaction 3-dehydro-L-gulonate + NADP(+) = 2,3-dioxo-L-gulonate + NADPH + H(+). Its function is as follows. Catalyzes the reduction of 2,3-diketo-L-gulonate in the presence of NADH, to form 3-keto-L-gulonate. The sequence is that of 2,3-diketo-L-gulonate reductase from Salmonella typhimurium (strain LT2 / SGSC1412 / ATCC 700720).